A 593-amino-acid chain; its full sequence is MRVTQEFYEFLRNRINISDVVRQKLALTRKSSNYVGLCPFHQEKTPSFTVSDSKRFFYCFGCKASGDVIKFTSNISGLSYNESAIKLANDYGIEIPKLTVKQKEFYEESDNILNILELANKFFRTQLTPEILNYLYKRNITETTIKEFSIGFAPRNNKFEKFFLDKKIDITKLGQAGLIGKCKNGKIYNLFSNRITIPIRNIYNKIVGFGGRVLGNELPKYLNSFETIVFQKSDILYGEHKAISSSYKKNRSILVEGYFDVIALHQAGFNEVVASLGTSVTESHLHKLWRAGDEIILCLDGDNAGIKASIRTINLALPLVNSEKKISFIRLPSGLDPDDAVNKNGADFFAKLIDKRISLSEMIWHIEYSGKNFRTAEEKANLEKNLKDYCNKISDSNLKASYYRFFKDQIWQNLVTKQKKIITPSSNSVLIASSHCYSELEMLEHAFCALLIKFPIMFAEKDIRDFILNLNFNNKSLEEFRNWYLNEIIDNKVKENEITAIVEKTSFFDIFLLLSKADNLFLDISFNKNNIRLDLLWQWLYKKYYLINLQQEYAISINSNHDFEKVLLYKKEIIKIVNELQVLNESFINQTIT.

The CHC2-type zinc-finger motif lies at cysteine 38–cysteine 62. The Toprim domain maps to asparagine 250 to proline 332. Positions 256, 300, and 302 each coordinate Mg(2+).

This sequence belongs to the DnaG primase family. In terms of assembly, monomer. Interacts with DnaB. It depends on Zn(2+) as a cofactor. Mg(2+) serves as cofactor.

The catalysed reaction is ssDNA + n NTP = ssDNA/pppN(pN)n-1 hybrid + (n-1) diphosphate.. In terms of biological role, RNA polymerase that catalyzes the synthesis of short RNA molecules used as primers for DNA polymerase during DNA replication. The chain is DNA primase from Rickettsia prowazekii (strain Madrid E).